A 345-amino-acid chain; its full sequence is sn-glycerol-3-phosphate import ATP-binding protein UgpC (345 aa).

One can recognise an ABC transporter domain in the interval 4-235; the sequence is IQLLNIKKQY…PKTIFVADFI (232 aa). 37–44 provides a ligand contact to ATP; the sequence is GPSGCGKS.

The protein belongs to the ABC transporter superfamily. sn-glycerol-3-phosphate importer (TC 3.A.1.1.3) family. In terms of assembly, the complex is composed of two ATP-binding proteins (UgpC), two transmembrane proteins (UgpA and UgpE) and a solute-binding protein (UgpB).

It localises to the cell inner membrane. The catalysed reaction is sn-glycerol 3-phosphate(out) + ATP + H2O = sn-glycerol 3-phosphate(in) + ADP + phosphate + H(+). Part of the ABC transporter complex UgpBAEC involved in sn-glycerol-3-phosphate (G3P) import. Responsible for energy coupling to the transport system. The sequence is that of sn-glycerol-3-phosphate import ATP-binding protein UgpC from Bartonella bacilliformis (strain ATCC 35685 / KC583 / Herrer 020/F12,63).